The primary structure comprises 502 residues: Mannitol 2-dehydrogenase (502 aa).

I37–A48 contributes to the NAD(+) binding site.

Belongs to the mannitol dehydrogenase family. As to quaternary structure, monomer.

It carries out the reaction D-mannitol + NAD(+) = D-fructose + NADH + H(+). Its function is as follows. Catalyzes the NAD(H)-dependent interconversion of D-fructose and D-mannitol in the mannitol metabolic pathway. This chain is Mannitol 2-dehydrogenase, found in Aspergillus oryzae (strain ATCC 42149 / RIB 40) (Yellow koji mold).